The sequence spans 963 residues: Phosphoenolpyruvate carboxylase 2 (963 aa).

A Phosphoserine modification is found at Ser-11. Active-site residues include His-172 and Lys-599. A Phosphoserine modification is found at Ser-701.

This sequence belongs to the PEPCase type 1 family. Homotetramer. Mg(2+) is required as a cofactor. As to expression, expressed in all plant organs, with higher levels in stems and leaves.

It is found in the cytoplasm. The enzyme catalyses oxaloacetate + phosphate = phosphoenolpyruvate + hydrogencarbonate. Its activity is regulated as follows. By light-reversible phosphorylation. Functionally, through the carboxylation of phosphoenolpyruvate (PEP) it forms oxaloacetate, a four-carbon dicarboxylic acid source for the tricarboxylic acid cycle. This is Phosphoenolpyruvate carboxylase 2 (PPC2) from Arabidopsis thaliana (Mouse-ear cress).